The chain runs to 345 residues: S-adenosylmethionine:tRNA ribosyltransferase-isomerase (345 aa).

Belongs to the QueA family. In terms of assembly, monomer.

The protein resides in the cytoplasm. The catalysed reaction is 7-aminomethyl-7-carbaguanosine(34) in tRNA + S-adenosyl-L-methionine = epoxyqueuosine(34) in tRNA + adenine + L-methionine + 2 H(+). It functions in the pathway tRNA modification; tRNA-queuosine biosynthesis. Its function is as follows. Transfers and isomerizes the ribose moiety from AdoMet to the 7-aminomethyl group of 7-deazaguanine (preQ1-tRNA) to give epoxyqueuosine (oQ-tRNA). The protein is S-adenosylmethionine:tRNA ribosyltransferase-isomerase of Shewanella loihica (strain ATCC BAA-1088 / PV-4).